The sequence spans 611 residues: Dihydroxy-acid dehydratase (611 aa).

D81 is a binding site for Mg(2+). Residue C122 participates in [2Fe-2S] cluster binding. Mg(2+)-binding residues include D123 and K124. At K124 the chain carries N6-carboxylysine. C195 is a [2Fe-2S] cluster binding site. Mg(2+) is bound at residue E491. The Proton acceptor role is filled by S517.

Belongs to the IlvD/Edd family. Homodimer. It depends on [2Fe-2S] cluster as a cofactor. Mg(2+) serves as cofactor.

It catalyses the reaction (2R)-2,3-dihydroxy-3-methylbutanoate = 3-methyl-2-oxobutanoate + H2O. It carries out the reaction (2R,3R)-2,3-dihydroxy-3-methylpentanoate = (S)-3-methyl-2-oxopentanoate + H2O. It functions in the pathway amino-acid biosynthesis; L-isoleucine biosynthesis; L-isoleucine from 2-oxobutanoate: step 3/4. It participates in amino-acid biosynthesis; L-valine biosynthesis; L-valine from pyruvate: step 3/4. In terms of biological role, functions in the biosynthesis of branched-chain amino acids. Catalyzes the dehydration of (2R,3R)-2,3-dihydroxy-3-methylpentanoate (2,3-dihydroxy-3-methylvalerate) into 2-oxo-3-methylpentanoate (2-oxo-3-methylvalerate) and of (2R)-2,3-dihydroxy-3-methylbutanoate (2,3-dihydroxyisovalerate) into 2-oxo-3-methylbutanoate (2-oxoisovalerate), the penultimate precursor to L-isoleucine and L-valine, respectively. The protein is Dihydroxy-acid dehydratase of Actinobacillus pleuropneumoniae serotype 3 (strain JL03).